Here is a 485-residue protein sequence, read N- to C-terminus: Peroxisomal catalase (485 aa).

Catalysis depends on residues histidine 53 and asparagine 126. Position 336 (tyrosine 336) interacts with heme.

It belongs to the catalase family. Homotetramer. Heme is required as a cofactor.

The protein resides in the peroxisome matrix. The enzyme catalyses 2 H2O2 = O2 + 2 H2O. Functionally, catalyzes the degradation of hydrogen peroxide (H(2)O(2)) generated by peroxisomal oxidases to water and oxygen, thereby protecting cells from the toxic effects of hydrogen peroxide. This Candida albicans (strain SC5314 / ATCC MYA-2876) (Yeast) protein is Peroxisomal catalase (CAT1).